A 253-amino-acid chain; its full sequence is Phycoerythrobilin:ferredoxin oxidoreductase (253 aa).

This sequence belongs to the HY2 family.

It carries out the reaction (3Z)-phycoerythrobilin + oxidized 2[4Fe-4S]-[ferredoxin] = 15,16-dihydrobiliverdin + reduced 2[4Fe-4S]-[ferredoxin] + 2 H(+). Its function is as follows. Catalyzes the two-electron reduction of the C2 and C3(1) diene system of 15,16-dihydrobiliverdin. The sequence is that of Phycoerythrobilin:ferredoxin oxidoreductase (pebB) from Prochlorococcus marinus (strain MIT 9215).